The following is a 79-amino-acid chain: Transcriptional regulator SplA (79 aa).

Its function is as follows. Regulator of the spore photoproduct lyase operon (splAB). This is Transcriptional regulator SplA (splA) from Bacillus subtilis (strain 168).